Consider the following 214-residue polypeptide: Melanoregulin (214 aa).

Residues 162–172 (LSERYLLVVDR) carry the Cholesterol-binding sequence motif motif. Position 213 is a phosphoserine (serine 213).

This sequence belongs to the melanoregulin family. As to quaternary structure, identified in a complex with RILP and DCTN1; interacts directly with RILP, but does not interact directly with DCTN1. Interacts with PRPH2. Palmitoylated. Palmitoylation is required to maintain the protein at the melanosome membrane. In terms of tissue distribution, detected in melanocytes. Expressed in retina, in retinal pigment epithelium (at protein level). Widely expressed with higher expression in skin, heart, liver, testis and thymus. Detected in retina, in retinal pigment epithelium cells.

It localises to the apical cell membrane. The protein resides in the melanosome membrane. It is found in the lysosome membrane. The protein localises to the cytoplasmic vesicle membrane. Functionally, probably functions as a cargo-recognition protein that couples cytoplasmic vesicles to the transport machinery. Plays a role in hair pigmentation, a process that involves shedding of melanosome-containing vesicles from melanocytes, followed by phagocytosis of the melanosome-containing vesicles by keratinocytes. Functions on melanosomes as receptor for RILP and the complex formed by RILP and DCTN1, and thereby contributes to retrograde melanosome transport from the cell periphery to the center. Overexpression causes accumulation of late endosomes and/or lysosomes at the microtubule organising center (MTOC) at the center of the cell. Probably binds cholesterol and requires the presence of cholesterol in membranes to function in microtubule-mediated retrograde organelle transport. Binds phosphatidylinositol 3-phosphate, phosphatidylinositol 4-phosphate, phosphatidylinositol 5-phosphate and phosphatidylinositol 3,5-bisphosphate, but not phosphatidylinositol 3,4-bisphosphate or phosphatidylinositol 4,5-bisphosphate. Required for normal phagosome clearing and normal activation of lysosomal enzymes in lysosomes from retinal pigment epithelium cells. Required for normal degradation of the lipofuscin component N-retinylidene-N-retinylethanolamine (A2E) in the eye. May function in membrane fusion and regulate the biogenesis of disk membranes of photoreceptor rod cells. The polypeptide is Melanoregulin (Mreg) (Mus musculus (Mouse)).